A 245-amino-acid chain; its full sequence is 1-(5-phosphoribosyl)-5-[(5-phosphoribosylamino)methylideneamino] imidazole-4-carboxamide isomerase (245 aa).

Asp-8 (proton acceptor) is an active-site residue. Residue Asp-130 is the Proton donor of the active site.

It belongs to the HisA/HisF family.

Its subcellular location is the cytoplasm. It carries out the reaction 1-(5-phospho-beta-D-ribosyl)-5-[(5-phospho-beta-D-ribosylamino)methylideneamino]imidazole-4-carboxamide = 5-[(5-phospho-1-deoxy-D-ribulos-1-ylimino)methylamino]-1-(5-phospho-beta-D-ribosyl)imidazole-4-carboxamide. It functions in the pathway amino-acid biosynthesis; L-histidine biosynthesis; L-histidine from 5-phospho-alpha-D-ribose 1-diphosphate: step 4/9. In Teredinibacter turnerae (strain ATCC 39867 / T7901), this protein is 1-(5-phosphoribosyl)-5-[(5-phosphoribosylamino)methylideneamino] imidazole-4-carboxamide isomerase.